The primary structure comprises 509 residues: Telomeric repeat-binding factor 2-interacting protein 1 (509 aa).

The BRCT domain occupies 1 to 91 (MAALGGLTHS…KLLDVDDYRL (91 aa)). The tract at residues 93–168 (GSHGRPRKSQ…RKKENKMDCS (76 aa)) is disordered. Polar residues predominate over residues 115 to 127 (VGESSQESDQKQQ). The segment covering 159–168 (RKKENKMDCS) has biased composition (basic and acidic residues). Residues 185–239 (RRNVFTEKEDVAIMLYVRENAPHRGTGVSLWKEMEQKQVVKRTWQAIKNRYFRYL) form the Myb-like domain. 2 disordered regions span residues 249–359 (LTDD…ENQD) and 399–423 (DLPS…ESEG). Composition is skewed to basic and acidic residues over residues 286-296 (GVAEKTGEKLS) and 321-344 (VEER…KSTE). Over residues 401-418 (PSSQSQTQVDEVSSSPDA) the composition is skewed to polar residues. Positions 493 to 509 (QKYGADNVAKRVAFLAS) match the Nuclear localization signal motif.

The protein belongs to the RAP1 family. Homodimer. Component of the shelterin complex (telosome). Interacts with terf2; the interaction is direct.

It is found in the nucleus. The protein resides in the chromosome. The protein localises to the telomere. In terms of biological role, acts both as a regulator of telomere function and as a transcription regulator. Involved in the regulation of telomere length and protection as a component of the shelterin complex (telosome). Does not bind DNA directly: recruited to telomeric double-stranded 5'-TTAGGG-3' repeats via its interaction with terf2. Independently of its function in telomeres, also acts as a transcription regulator: recruited to extratelomeric 5'-TTAGGG-3' sites via its association with terf2 or other factors, and regulates gene expression. This is Telomeric repeat-binding factor 2-interacting protein 1 (terf2ip) from Xenopus tropicalis (Western clawed frog).